We begin with the raw amino-acid sequence, 214 residues long: MTLALTAEKIERNRFTGLKVENSTFHHCDFSGADLTGTEFIGCQFYDRENQKGCNFSRAILKDAIFKNCDLSMADFRNASALGIEIRGCRAQGADFRGTSFMNMITTRTWFCSAYITNTNLSYANFSKAVLEKCELWENRWMGTQVLGATFSGSDLSGGEFSSFDWRAANVTHCDLTNSELGDLDVRGVDLQGVKLDSYQVSLIMERLGVAIIG.

2 consecutive Pentapeptide repeat domains span residues 23 to 103 and 116 to 189; these read STFH…SFMN and ITNT…VRGV.

Belongs to the pentapeptide repeat protein family.

Its function is as follows. Confers reduced sensitivity to the fluoroquinolone antibiotic ciprofloxacin (five-fold increase in minimum inhibitory concentration) when expressed in E.coli. This is Quinolone resistance pentapeptide repeat protein QnrB96 from Scandinavium goeteborgense.